A 507-amino-acid polypeptide reads, in one-letter code: Protein zntA (507 aa).

Residues 1-18 (MSIFAYSILAGLAPLLSS) form the signal peptide. N-linked (GlcNAc...) asparagine glycosylation is present at Asn-31. A helical membrane pass occupies residues 35–55 (FHILLCISAGLLFAVASLELI). Positions 124-179 (GLNLNNLNQATNLDNNEEDNDNLDNDGENEIENDHDHDHQEDEGGDNDHDHESEEK) are disordered. Positions 125–137 (LNLNNLNQATNLD) are enriched in low complexity. Positions 138–154 (NNEEDNDNLDNDGENEI) are enriched in acidic residues. Over residues 155 to 179 (ENDHDHDHQEDEGGDNDHDHESEEK) the composition is skewed to basic and acidic residues. Residues 185-205 (IPMYGIGFGFAILIIVESIFS) traverse the membrane as a helical segment. The disordered stretch occupies residues 209–264 (GGGGGGGHHSHSHGSLSSSSSNDVISDYISNNNSNNINNNDDDNNNNNNNNDDDDD). The span at 221-258 (HGSLSSSSSNDVISDYISNNNSNNINNNDDDNNNNNNN) shows a compositional bias: low complexity. N-linked (GlcNAc...) asparagine glycans are attached at residues Asn-240, Asn-298, Asn-328, Asn-342, and Asn-351. The disordered stretch occupies residues 305–350 (PNIASPVMNKDNNNNDKDKNRNSNKSDIKNSGSINNGNNSGNNNNN). Over residues 317 to 332 (NNNDKDKNRNSNKSDI) the composition is skewed to basic and acidic residues. Low complexity predominate over residues 333–350 (KNSGSINNGNNSGNNNNN). 5 consecutive transmembrane segments (helical) span residues 355–375 (LTIT…VVIS), 388–408 (VALA…SLIL), 422–442 (FFYF…SSFL), 451–471 (GAFV…TAIL), and 486–506 (LFSI…FHGA).

This sequence belongs to the ZIP transporter (TC 2.A.5) family.

The protein localises to the membrane. In terms of biological role, may transport divalent cations. May participate, with dstA, in the regulation of the differentiation of stalk cells during development. This is Protein zntA (zntA) from Dictyostelium discoideum (Social amoeba).